The chain runs to 724 residues: MNLQELLAKVPLLLSYPTIILSSNLIVPSHNDLISRAASTSAAEYADEKLIFFSTDHAIRLIFLPTFVASSFNLFAHYFNFINYSSRRKYYVLFTAIYFLSILTAIFHPIQSTCITLLIIKLLTTADESSPKIALNFKTILKTFVPFITLTLVILRWDPSFDASSGDVNKISTSLAAYALLILTLRYASPLILSTLSSSIGVVSKDTSVAQHSISRNKRFPLILVLPIFSFVLLYLMTIVNKTYNIQLLMVFVFFGCLSIFFLSLKDLFTEDGNQKKGGQEDEYCRMFDIKYMISYLWLTRFTILLTGIMAIVVHFLSFNEITSSIKTDLLSLLFVVVAEYVSSFSNKQPDSHSHNHAHHHSHLTDSLPLENESMFKQMALNKDTRSIFSFLLLNTAFMFVQLLYSFRSKSLGLLSDSLHMALDCTSLLLGLIAGVLTKKPASDKFPFGLNYLGTLAGFTNGVLLLGIVCGIFVEAIERIFNPIHLHATNELLVVATLGLLVNLVGLFAFDHGAHDHGGTDNENMKGIFLHILADTLGSVGVVISTLLIKLTHWPIFDPIASLLIGSLILLSALPLLKSTSANILLRLDDKKHNLVKSALNQISTTPGITGYTTPRFWPTESGSSGHSHAHTHSHAENHSHEHHHDQKNGSQEHPSLVGYIHVQYVDGENSTIIKKRVEKIFENVSIKAWVQVEPQNSTCWCRATSMNTISANPNSLPLQPIAN.

Topologically, residues 1–6 are cytoplasmic; it reads MNLQEL. Residues 7-27 traverse the membrane as a helical segment; sequence LAKVPLLLSYPTIILSSNLIV. Topologically, residues 28–58 are lumenal; sequence PSHNDLISRAASTSAAEYADEKLIFFSTDHA. Residues 59–79 traverse the membrane as a helical segment; that stretch reads IRLIFLPTFVASSFNLFAHYF. At 80–90 the chain is on the cytoplasmic side; sequence NFINYSSRRKY. A helical transmembrane segment spans residues 91–111; that stretch reads YVLFTAIYFLSILTAIFHPIQ. Residues 112–134 are Lumenal-facing; the sequence is STCITLLIIKLLTTADESSPKIA. Residues 135-155 traverse the membrane as a helical segment; that stretch reads LNFKTILKTFVPFITLTLVIL. The Cytoplasmic portion of the chain corresponds to 156-174; sequence RWDPSFDASSGDVNKISTS. A helical membrane pass occupies residues 175-195; sequence LAAYALLILTLRYASPLILST. Residues 196-219 lie on the Lumenal side of the membrane; sequence LSSSIGVVSKDTSVAQHSISRNKR. Residues 220-240 traverse the membrane as a helical segment; it reads FPLILVLPIFSFVLLYLMTIV. Residues 241–244 are Cytoplasmic-facing; it reads NKTY. A helical membrane pass occupies residues 245–265; sequence NIQLLMVFVFFGCLSIFFLSL. At 266 to 298 the chain is on the lumenal side; the sequence is KDLFTEDGNQKKGGQEDEYCRMFDIKYMISYLW. The helical transmembrane segment at 299–319 threads the bilayer; that stretch reads LTRFTILLTGIMAIVVHFLSF. The Cytoplasmic segment spans residues 320-386; the sequence is NEITSSIKTD…KQMALNKDTR (67 aa). Residues 387 to 407 traverse the membrane as a helical segment; that stretch reads SIFSFLLLNTAFMFVQLLYSF. Residues 408–417 are Lumenal-facing; that stretch reads RSKSLGLLSD. A helical transmembrane segment spans residues 418-438; that stretch reads SLHMALDCTSLLLGLIAGVLT. Residues 439 to 453 lie on the Cytoplasmic side of the membrane; the sequence is KKPASDKFPFGLNYL. A helical membrane pass occupies residues 454-474; it reads GTLAGFTNGVLLLGIVCGIFV. The Lumenal portion of the chain corresponds to 475–491; that stretch reads EAIERIFNPIHLHATNE. Residues 492–512 traverse the membrane as a helical segment; sequence LLVVATLGLLVNLVGLFAFDH. Over 513 to 528 the chain is Cytoplasmic; the sequence is GAHDHGGTDNENMKGI. Residues 529–549 form a helical membrane-spanning segment; it reads FLHILADTLGSVGVVISTLLI. Over 550–563 the chain is Lumenal; it reads KLTHWPIFDPIASL. The helical transmembrane segment at 564–584 threads the bilayer; sequence LIGSLILLSALPLLKSTSANI. Topologically, residues 585–724 are cytoplasmic; that stretch reads LLRLDDKKHN…NSLPLQPIAN (140 aa). Positions 614-653 are disordered; the sequence is TPRFWPTESGSSGHSHAHTHSHAENHSHEHHHDQKNGSQE. Residues 634-648 show a composition bias toward basic and acidic residues; the sequence is SHAENHSHEHHHDQK.

This sequence belongs to the cation diffusion facilitator (CDF) transporter (TC 2.A.4) family. SLC30A subfamily.

The protein localises to the endoplasmic reticulum membrane. It is found in the nucleus membrane. In terms of biological role, probably act as a zinc ion transporter moving zinc from the nucleus/endoplasmic reticulum to the cytoplasm. Involved in zinc ion homeostasis and cellular distribution. The protein is Probable zinc transporter MSC2 (MSC2) of Saccharomyces cerevisiae (strain ATCC 204508 / S288c) (Baker's yeast).